We begin with the raw amino-acid sequence, 931 residues long: Neuropilin-2 (931 aa).

The segment at residues 1–20 is a signal peptide (or 22); that stretch reads MDMFPLTWVFLALYFSRHQV. Residues 21–864 lie on the Extracellular side of the membrane; sequence RGQPDPPCGG…EKSWLYTLDP (844 aa). Cystine bridges form between Cys-28–Cys-55, Cys-83–Cys-105, and Cys-149–Cys-175. CUB domains are found at residues 28-142 and 149-267; these read CGGR…YEIF and CSKN…YYLV. 2 N-linked (GlcNAc...) asparagine glycosylation sites follow: Asn-152 and Asn-157. Positions 197, 211, and 252 each coordinate Ca(2+). A disulfide bridge links Cys-208 with Cys-230. Intrachain disulfides connect Cys-277–Cys-427 and Cys-434–Cys-592. F5/8 type C domains follow at residues 277 to 427 and 434 to 592; these read CNVP…LFGC and CSNM…VLGC. The span at 298-310 shows a compositional bias: polar residues; the sequence is TYSDGRWTPQQSR. The disordered stretch occupies residues 298 to 317; that stretch reads TYSDGRWTPQQSRLHGDDNG. The segment at 601–622 is disordered; that stretch reads VETLGPTVKSEETTTPYPTEEE. Asn-629 carries an N-linked (GlcNAc...) asparagine glycan. Residues 642–802 enclose the MAM domain; the sequence is SGFNCNFDFL…TDVPLENCME (161 aa). Asn-839 carries an N-linked (GlcNAc...) asparagine glycan. The chain crosses the membrane as a helical span at residues 865–889; the sequence is ILITIIAMSSLGVLLGATCAGLLLY. Topologically, residues 890–931 are cytoplasmic; that stretch reads CTCSYSGLSSRSCTTLENYNFELYDGLKHKVKMNHQKCCSEA.

This sequence belongs to the neuropilin family. As to quaternary structure, heterodimer with NRP1. Binds PLXNB1. (Microbial infection) Interacts with human cytomegalovirus proteins gL, UL128, UL130 and UL131A.

Its subcellular location is the membrane. It localises to the secreted. Functionally, high affinity receptor for semaphorins 3C, 3F, VEGF-165 and VEGF-145 isoforms of VEGF, and the PLGF-2 isoform of PGF. Its function is as follows. (Microbial infection) Acts as a receptor for human cytomegalovirus pentamer-dependent entry in epithelial and endothelial cells. This is Neuropilin-2 (NRP2) from Homo sapiens (Human).